The primary structure comprises 274 residues: Coiled-coil domain-containing protein 28A (274 aa).

The segment at Val121–His166 is disordered. The segment covering Ser122 to Arg138 has biased composition (polar residues). Positions Lys234–Ala263 form a coiled coil.

In Homo sapiens (Human), this protein is Coiled-coil domain-containing protein 28A (CCDC28A).